Reading from the N-terminus, the 332-residue chain is Hygromycin-B 7''-O-kinase (332 aa).

Catalysis depends on D223, which acts as the Proton acceptor.

Belongs to the aminoglycoside phosphotransferase family.

It catalyses the reaction hygromycin B + ATP = 7''-O-phosphohygromycin B + ADP + H(+). Functionally, the aminoglycoside phosphotransferases achieve inactivation of their antibiotic substrates by phosphorylation. The polypeptide is Hygromycin-B 7''-O-kinase (hyg) (Streptomyces hygroscopicus).